The following is a 714-amino-acid chain: BRCA1-associated RING domain protein 1 (714 aa).

The segment at 25–63 (CPLCLKLLNRPVLLPCDHVFCDSCVHKSSQVESGCPVCK) adopts an RING-type zinc-finger fold. 2 disordered regions span residues 106 to 165 (YKND…QDWT) and 254 to 283 (KAQN…DAME). Positions 118–134 (KHGESEDSEMTDKDVSK) are enriched in basic and acidic residues. Residues 135 to 147 (RSGGTDSSSRDGS) show a composition bias toward low complexity. Basic and acidic residues-rich tracts occupy residues 155 to 165 (SDPRPKHQDWT) and 264 to 283 (SHTE…DAME). The C2HC pre-PHD-type zinc-finger motif lies at 331–382 (ITICGFCQSARVSEATGEMLHYSRGRPVDGDDIFRSNVIHVHSACIEWAPQV). The PHD-type zinc finger occupies 402-451 (IKCTKCSLKGAALGCFVKSCRRSYHVPCAREISRCRWDYEDFLLLCPAHS). 2 BRCT domains span residues 482-577 (EQTP…PFEI) and 598-713 (NKPK…HPVI).

In terms of assembly, component of a DNA-protein complex on WUS and WOX5 promoters. Interacts with SYD. Forms heterodimer with BRCA1. In terms of tissue distribution, expressed in the shoot apical meristem (SAM), roots, flowers, embryos and seedlings. Mostly expressed in flowers and siliques, and, to a lower extent, in roots, rosette leaves, inflorescence and young cauline leaves.

It localises to the nucleus. In terms of biological role, binds specifically to H3K4me3 regions of target genes (e.g. WUS and WOX5) promoters to repress their transcription via chromatin remodeling. Required for the shoot apical meristem (SAM) organization and maintenance, by confining WUS expression to the organizing center, and for the quiescent center (QC) development in the root apical meristem (RAM), by repressing WOX5 expression in the root proximal meristem. Plays a role in DNA repair and in cell-cycle control. Required for the repair of DNA double-strand breaks (DSBs), both natural and induced by genotoxic stress, by homologous recombination (HR). The chain is BRCA1-associated RING domain protein 1 from Arabidopsis thaliana (Mouse-ear cress).